A 504-amino-acid chain; its full sequence is ATP synthase subunit alpha (504 aa).

169–176 serves as a coordination point for ATP; sequence GDRKTGKT.

Belongs to the ATPase alpha/beta chains family. As to quaternary structure, F-type ATPases have 2 components, CF(1) - the catalytic core - and CF(0) - the membrane proton channel. CF(1) has five subunits: alpha(3), beta(3), gamma(1), delta(1), epsilon(1). CF(0) has three main subunits: a(1), b(2) and c(9-12). The alpha and beta chains form an alternating ring which encloses part of the gamma chain. CF(1) is attached to CF(0) by a central stalk formed by the gamma and epsilon chains, while a peripheral stalk is formed by the delta and b chains.

It localises to the cell membrane. The enzyme catalyses ATP + H2O + 4 H(+)(in) = ADP + phosphate + 5 H(+)(out). In terms of biological role, produces ATP from ADP in the presence of a proton gradient across the membrane. The alpha chain is a regulatory subunit. The polypeptide is ATP synthase subunit alpha (Lactiplantibacillus plantarum (strain ATCC BAA-793 / NCIMB 8826 / WCFS1) (Lactobacillus plantarum)).